The primary structure comprises 647 residues: Threonine--tRNA ligase (647 aa).

Residues 1–61 (MIKITFPDGA…TEDGAIEIVT (61 aa)) enclose the TGS domain. Residues 242-540 (DHRKLGKELD…LIENYKGAFP (299 aa)) are catalytic. Cysteine 336, histidine 387, and histidine 517 together coordinate Zn(2+).

This sequence belongs to the class-II aminoacyl-tRNA synthetase family. Homodimer. Zn(2+) is required as a cofactor.

The protein resides in the cytoplasm. The catalysed reaction is tRNA(Thr) + L-threonine + ATP = L-threonyl-tRNA(Thr) + AMP + diphosphate + H(+). Catalyzes the attachment of threonine to tRNA(Thr) in a two-step reaction: L-threonine is first activated by ATP to form Thr-AMP and then transferred to the acceptor end of tRNA(Thr). Also edits incorrectly charged L-seryl-tRNA(Thr). The chain is Threonine--tRNA ligase from Streptococcus sanguinis (strain SK36).